A 412-amino-acid chain; its full sequence is 2,3-bisphosphoglycerate-independent phosphoglycerate mutase (412 aa).

Belongs to the BPG-independent phosphoglycerate mutase family. A-PGAM subfamily.

The enzyme catalyses (2R)-2-phosphoglycerate = (2R)-3-phosphoglycerate. The protein operates within carbohydrate degradation; glycolysis; pyruvate from D-glyceraldehyde 3-phosphate: step 3/5. In terms of biological role, catalyzes the interconversion of 2-phosphoglycerate and 3-phosphoglycerate. This Methanobrevibacter smithii (strain ATCC 35061 / DSM 861 / OCM 144 / PS) protein is 2,3-bisphosphoglycerate-independent phosphoglycerate mutase.